A 638-amino-acid polypeptide reads, in one-letter code: NBPF family member NBPF6 (638 aa).

2 coiled-coil regions span residues 10 to 43 (SERAEMNILEINQELRSQLAESNQQFRDLKEKFL) and 69 to 115 (DSVL…KLRE). Positions 157 to 285 (HLVHKLSPEN…VPPRHHDKSN (129 aa)) are disordered. Positions 165 to 179 (ENDEDEDEDEDDKDE) are enriched in acidic residues. The Olduvai 1 domain maps to 174–261 (EDDKDEEVEK…EEEEALNIPP (88 aa)). A compositionally biased stretch (basic and acidic residues) spans 192–202 (EVQKTEEKEVP). A compositionally biased stretch (low complexity) spans 214 to 226 (SNSHNPSNSNQPH). Basic and acidic residues-rich tracts occupy residues 232-251 (TFKEHEVDSALVVESEHPHD) and 264-273 (QNDHEEEEGK). Olduvai domains lie at 326-399 (EKQS…ALVD) and 400-503 (KIKK…SQAQ). The segment at 563 to 584 (MKNPPQLEDDALEGSASNTQGR) is disordered.

Belongs to the NBPF family.

It localises to the cytoplasm. The protein is NBPF family member NBPF6 of Homo sapiens (Human).